The primary structure comprises 30 residues: Nattererin-1 (30 aa).

As to expression, expressed by the skin glands.

It localises to the secreted. Its function is as follows. Probably has antibacterial activity. This chain is Nattererin-1, found in Physalaemus nattereri (Cuyaba dwarf frog).